The following is a 133-amino-acid chain: Gamma-crystallin 1 (133 aa).

One can recognise a Beta/gamma crystallin 'Greek key' 2 domain in the interval 1 to 41 (WMLYEHPNYTGHQYFLRRGEYPDFQQWMGLNDSIRSCRVIP). The tract at residues 42 to 46 (QHRGS) is connecting peptide. 2 consecutive Beta/gamma crystallin 'Greek key' domains span residues 47–87 (FRLR…NVLE) and 88–130 (GHWI…RRVQ).

This sequence belongs to the beta/gamma-crystallin family. In terms of assembly, monomer.

Its function is as follows. Crystallins are the dominant structural components of the vertebrate eye lens. The protein is Gamma-crystallin 1 of Rana temporaria (European common frog).